The chain runs to 715 residues: Macrolide export ATP-binding/permease protein MacB (715 aa).

One can recognise an ABC transporter domain in the interval 4–245; sequence IELQDIRKTY…VSKAAPAQSK (242 aa). Residue 40–47 participates in ATP binding; sequence GTSGSGKT. The interval 229–251 is disordered; it reads AVGDMPQVSKAAPAQSKPVHSAM. Transmembrane regions (helical) follow at residues 277 to 297, 592 to 612, 639 to 659, and 681 to 701; these read AALTTLGIIIGVAAVIAMMEI, LLLAVALISLIVGGVGIMNIM, QFLFEAVLLCFLGGAVGILVG, and ILAAVGVSATVGIVFGYYPAW.

Belongs to the ABC transporter superfamily. Macrolide exporter (TC 3.A.1.122) family. In terms of assembly, homodimer.

The protein localises to the cell inner membrane. Its function is as follows. Non-canonical ABC transporter that contains transmembrane domains (TMD), which form a pore in the inner membrane, and an ATP-binding domain (NBD), which is responsible for energy generation. Confers resistance against macrolides. This is Macrolide export ATP-binding/permease protein MacB from Syntrophobacter fumaroxidans (strain DSM 10017 / MPOB).